We begin with the raw amino-acid sequence, 41 residues long: Large ribosomal subunit protein bL36 (41 aa).

This sequence belongs to the bacterial ribosomal protein bL36 family.

The sequence is that of Large ribosomal subunit protein bL36 from Bartonella bacilliformis (strain ATCC 35685 / KC583 / Herrer 020/F12,63).